Here is a 307-residue protein sequence, read N- to C-terminus: ATP-dependent (S)-NAD(P)H-hydrate dehydratase (307 aa).

The region spanning 1-291 (MDHFLKLLPK…DEIPKLVRDV (291 aa)) is the YjeF C-terminal domain. (6S)-NADPHX is bound by residues glycine 96 and 150-156 (NIVEFSR). ATP contacts are provided by residues 194-198 (KGEVD) and 214-223 (SSLRRCGGQG). Aspartate 224 contacts (6S)-NADPHX.

Belongs to the NnrD/CARKD family. Mg(2+) is required as a cofactor.

It catalyses the reaction (6S)-NADHX + ATP = ADP + phosphate + NADH + H(+). The catalysed reaction is (6S)-NADPHX + ATP = ADP + phosphate + NADPH + H(+). Functionally, catalyzes the dehydration of the S-form of NAD(P)HX at the expense of ATP, which is converted to ADP. Together with NAD(P)HX epimerase, which catalyzes the epimerization of the S- and R-forms, the enzyme allows the repair of both epimers of NAD(P)HX, a damaged form of NAD(P)H that is a result of enzymatic or heat-dependent hydration. The protein is ATP-dependent (S)-NAD(P)H-hydrate dehydratase of Caenorhabditis briggsae.